Reading from the N-terminus, the 140-residue chain is Transcription antitermination protein NusB (140 aa).

Belongs to the NusB family.

In terms of biological role, involved in transcription antitermination. Required for transcription of ribosomal RNA (rRNA) genes. Binds specifically to the boxA antiterminator sequence of the ribosomal RNA (rrn) operons. The polypeptide is Transcription antitermination protein NusB (Alteromonas mediterranea (strain DSM 17117 / CIP 110805 / LMG 28347 / Deep ecotype)).